A 430-amino-acid polypeptide reads, in one-letter code: MMNTEGNNGNKPLGLWNVVSIGIGAMVGAGIFALLGQAALLMEASTWVAFAFGGIVAMFSGYAYARLGASYPSNGGIIDFFRRGLGNGVFSLALSLLYLLTLAVSIAMVARAFGAYAVQFLHEGSQEEHLILLYALGIIAVMTLFNSLSNHAVGRLEVILVGIKMMILLLLIIAGVWSLQPAHISVSAPPSSGAFFSCIGITFLAYAGFGMMANAADKVKDPQVIMPRAFLVAIGVTTLLYISLALVLLSDVSALELEKYADTAVAQAASPLLGHVGYVIVVIGALLATASAINANLFAVFNIMDNMGSERELPKLMNKSLWRQSTWGNIIVVVLIMLMTAALNLGSLASVASATFLICYLAVFVVAIRLRHDIHASLPILIVGTLVMLLVIVGFIYSLWSQGSRALIWIIGSLLLSLIVAMVMKRNKTV.

Residues 1–14 lie on the Cytoplasmic side of the membrane; the sequence is MMNTEGNNGNKPLG. The chain crosses the membrane as a helical span at residues 15-35; that stretch reads LWNVVSIGIGAMVGAGIFALL. Over 36 to 38 the chain is Periplasmic; it reads GQA. A helical transmembrane segment spans residues 39–59; sequence ALLMEASTWVAFAFGGIVAMF. Topologically, residues 60–88 are cytoplasmic; the sequence is SGYAYARLGASYPSNGGIIDFFRRGLGNG. Residues 89–109 form a helical membrane-spanning segment; sequence VFSLALSLLYLLTLAVSIAMV. The Periplasmic portion of the chain corresponds to 110 to 128; the sequence is ARAFGAYAVQFLHEGSQEE. The helical transmembrane segment at 129–149 threads the bilayer; that stretch reads HLILLYALGIIAVMTLFNSLS. The Cytoplasmic portion of the chain corresponds to 150 to 157; sequence NHAVGRLE. A helical transmembrane segment spans residues 158-178; sequence VILVGIKMMILLLLIIAGVWS. Residues 179-192 are Periplasmic-facing; sequence LQPAHISVSAPPSS. A helical transmembrane segment spans residues 193–213; that stretch reads GAFFSCIGITFLAYAGFGMMA. The Cytoplasmic segment spans residues 214–228; that stretch reads NAADKVKDPQVIMPR. The chain crosses the membrane as a helical span at residues 229–249; sequence AFLVAIGVTTLLYISLALVLL. The Periplasmic segment spans residues 250-272; that stretch reads SDVSALELEKYADTAVAQAASPL. The chain crosses the membrane as a helical span at residues 273-293; it reads LGHVGYVIVVIGALLATASAI. At 294–325 the chain is on the cytoplasmic side; sequence NANLFAVFNIMDNMGSERELPKLMNKSLWRQS. The chain crosses the membrane as a helical span at residues 326 to 346; the sequence is TWGNIIVVVLIMLMTAALNLG. Residue Ser-347 is a topological domain, periplasmic. Residues 348-368 form a helical membrane-spanning segment; it reads LASVASATFLICYLAVFVVAI. Topologically, residues 369-379 are cytoplasmic; sequence RLRHDIHASLP. The chain crosses the membrane as a helical span at residues 380 to 400; the sequence is ILIVGTLVMLLVIVGFIYSLW. Residues 401–403 are Periplasmic-facing; that stretch reads SQG. Residues 404–424 traverse the membrane as a helical segment; that stretch reads SRALIWIIGSLLLSLIVAMVM. At 425 to 430 the chain is on the cytoplasmic side; that stretch reads KRNKTV.

Belongs to the amino acid-polyamine-organocation (APC) superfamily.

Its subcellular location is the cell inner membrane. Probable amino-acid or metabolite transport protein. The chain is Inner membrane transport protein YbaT (ybaT) from Escherichia coli (strain K12).